The following is a 255-amino-acid chain: Uracil-DNA glycosylase (255 aa).

The interval 1 to 20 is disordered; it reads MFSASTTPEQPLGLSGDATP. D99 functions as the Proton acceptor in the catalytic mechanism.

Belongs to the uracil-DNA glycosylase (UDG) superfamily. UNG family.

It is found in the host nucleus. The catalysed reaction is Hydrolyzes single-stranded DNA or mismatched double-stranded DNA and polynucleotides, releasing free uracil.. Excises uracil residues from the DNA which can arise as a result of misincorporation of dUMP residues by DNA polymerase or deamination of cytosines. Therefore may reduce deleterious uracil incorporation into the viral genome, particularly in terminally differentiated cells which lack DNA repair enzymes. The chain is Uracil-DNA glycosylase from Human herpesvirus 2 (strain HG52) (HHV-2).